The primary structure comprises 248 residues: Ribonuclease PH (248 aa).

Residues arginine 86 and glycine 124–arginine 126 each bind phosphate.

This sequence belongs to the RNase PH family. In terms of assembly, homohexameric ring arranged as a trimer of dimers.

It catalyses the reaction tRNA(n+1) + phosphate = tRNA(n) + a ribonucleoside 5'-diphosphate. Phosphorolytic 3'-5' exoribonuclease that plays an important role in tRNA 3'-end maturation. Removes nucleotide residues following the 3'-CCA terminus of tRNAs; can also add nucleotides to the ends of RNA molecules by using nucleoside diphosphates as substrates, but this may not be physiologically important. Probably plays a role in initiation of 16S rRNA degradation (leading to ribosome degradation) during starvation. This chain is Ribonuclease PH, found in Listeria welshimeri serovar 6b (strain ATCC 35897 / DSM 20650 / CCUG 15529 / CIP 8149 / NCTC 11857 / SLCC 5334 / V8).